Consider the following 171-residue polypeptide: Neudesin (171 aa).

The first 30 residues, 1–30 (MARPAPWWWLRPLAALALALALVRVPSARA), serve as a signal peptide directing secretion. The Cytochrome b5 heme-binding domain maps to 43–128 (VRLFTEEELA…KELEALDDIF (86 aa)). Lys135 is modified (N6-acetyllysine). Residues 151–171 (GSPNLDFKPEDQPHFDIKDEF) are disordered. Residues 157-171 (FKPEDQPHFDIKDEF) are compositionally biased toward basic and acidic residues.

It belongs to the cytochrome b5 family. MAPR subfamily. As to quaternary structure, interacts with PINK1 and PARK7.

The protein resides in the secreted. It localises to the extracellular space. Its subcellular location is the mitochondrion. It is found in the endoplasmic reticulum. In terms of biological role, acts as a neurotrophic factor in postnatal mature neurons enhancing neuronal survival. Promotes cell proliferation and neurogenesis in undifferentiated neural progenitor cells at the embryonic stage and inhibits differentiation of astrocytes. Its neurotrophic activity is exerted via MAPK1/ERK2, MAPK3/ERK1 and AKT1/AKT pathways. Neurotrophic activity is enhanced by binding to heme. Also acts as an anorexigenic neurotrophic factor that contributes to energy balance. This chain is Neudesin, found in Rattus norvegicus (Rat).